A 140-amino-acid polypeptide reads, in one-letter code: uncharacterized protein (140 aa).

A glycan (N-linked (GlcNAc...) asparagine; by host) is linked at asparagine 86. The chain crosses the membrane as a helical span at residues 92–112; sequence IFNGLGFILIVIFIYLLLITL.

The protein belongs to the asfivirus B117L family.

The protein resides in the host membrane. It localises to the virion. This is an uncharacterized protein from African swine fever virus (isolate Pig/Kenya/KEN-50/1950) (ASFV).